The primary structure comprises 190 residues: MDRGEEPMSARPALETESLRFLHVTVGSLLASYGWYILFSCVLLYIVIQKLSLRLRALRQRQLDQAEAVLEPDVVVKRQEALAAARLRMQEDLNAQVEKHKEKQRQLEEEKRRQKIEMWDSMQEGRSYKRNSGRPQEEDGPGPSTSSVIPKGKSDKKPLRGGGYNPLTGEGGGTCSWRPGRRGPSSGGUS.

The chain crosses the membrane as a helical span at residues 28 to 48 (SLLASYGWYILFSCVLLYIVI). The segment at 78–90 (RQEALAAARLRMQ) is VCP/p97-interacting motif (VIM). Residues 96–190 (QVEKHKEKQR…RRGPSSGGUS (95 aa)) form a disordered region. Over residues 97–118 (VEKHKEKQRQLEEEKRRQKIEM) the composition is skewed to basic and acidic residues. Gly residues predominate over residues 160–174 (RGGGYNPLTGEGGGT). Position 189 (selenocysteine 189) is a non-standard amino acid, selenocysteine.

The protein belongs to the selenoprotein S family. In terms of assembly, interacts with DERL1 and (via VIM motif) with VCP, suggesting that it forms a membrane complex with DERL1 that serves as a receptor for VCP. Also interacts with DERL2, DERL3 and SELENOK. The SELENOK-SELENOS complex interacts with VCP. Interacts with CCDC47. Truncated SELENOS proteins produced by failed UGA/Sec decoding are ubiquitinated by the CRL2(KLHDC2) and CRL2(KLHDC3) complexes, which recognizes the glycine (Gly) at the C-terminus of truncated SELENOS proteins. Truncated SELENOS proteins produced by failed UGA/Sec decoding are also ubiquitinated by the CRL5(KLHDC1) complex.

It is found in the endoplasmic reticulum membrane. The protein resides in the cytoplasm. Functionally, involved in the degradation process of misfolded endoplasmic reticulum (ER) luminal proteins. Participates in the transfer of misfolded proteins from the ER to the cytosol, where they are destroyed by the proteasome in a ubiquitin-dependent manner. Probably acts by serving as a linker between DERL1, which mediates the retrotranslocation of misfolded proteins into the cytosol, and the ATPase complex VCP, which mediates the translocation and ubiquitination. The polypeptide is Selenoprotein S (Rattus norvegicus (Rat)).